We begin with the raw amino-acid sequence, 316 residues long: DNA-directed RNA polymerase subunit alpha (316 aa).

The alpha N-terminal domain (alpha-NTD) stretch occupies residues 1 to 229; that stretch reads MLEMEKPRID…EYLKLFTEID (229 aa). The interval 246 to 316 is alpha C-terminal domain (alpha-CTD); that stretch reads KDKILEMSIE…LNLSFRKSED (71 aa).

The protein belongs to the RNA polymerase alpha chain family. As to quaternary structure, homodimer. The RNAP catalytic core consists of 2 alpha, 1 beta, 1 beta' and 1 omega subunit. When a sigma factor is associated with the core the holoenzyme is formed, which can initiate transcription.

The enzyme catalyses RNA(n) + a ribonucleoside 5'-triphosphate = RNA(n+1) + diphosphate. DNA-dependent RNA polymerase catalyzes the transcription of DNA into RNA using the four ribonucleoside triphosphates as substrates. The protein is DNA-directed RNA polymerase subunit alpha of Syntrophomonas wolfei subsp. wolfei (strain DSM 2245B / Goettingen).